The chain runs to 364 residues: Cobalt-precorrin-5B C(1)-methyltransferase (364 aa).

It belongs to the CbiD family.

It carries out the reaction Co-precorrin-5B + S-adenosyl-L-methionine = Co-precorrin-6A + S-adenosyl-L-homocysteine. It functions in the pathway cofactor biosynthesis; adenosylcobalamin biosynthesis; cob(II)yrinate a,c-diamide from sirohydrochlorin (anaerobic route): step 6/10. Its function is as follows. Catalyzes the methylation of C-1 in cobalt-precorrin-5B to form cobalt-precorrin-6A. The chain is Cobalt-precorrin-5B C(1)-methyltransferase from Pseudomonas putida (strain ATCC 47054 / DSM 6125 / CFBP 8728 / NCIMB 11950 / KT2440).